The following is a 554-amino-acid chain: GPI transamidase component PIG-S homolog (554 aa).

At 1 to 73 (MSPCKWLTMF…LNKPEKSLKR (73 aa)) the chain is on the cytoplasmic side. The helical transmembrane segment at 74-94 (YALLSFYVIILLAIPVWWKTT) threads the bilayer. The Lumenal segment spans residues 95–511 (HYERSSLPFE…VTTIYFPDES (417 aa)). Residues Asn-132 and Asn-375 are each glycosylated (N-linked (GlcNAc...) asparagine). Residues 512 to 532 (KYGIYAPLFAPILIPLLISFI) traverse the membrane as a helical segment. Topologically, residues 533 to 554 (KEVKDMLRERKLHRVANVPKPN) are cytoplasmic.

This sequence belongs to the PIGS family. In terms of assembly, forms a complex with PIG-T homolog, PIG-U homolog and GPI8.

It localises to the endoplasmic reticulum membrane. It participates in glycolipid biosynthesis; glycosylphosphatidylinositol-anchor biosynthesis. Component of the GPI transamidase complex. Involved in transfer of GPI to proteins. This chain is GPI transamidase component PIG-S homolog (gpi17), found in Schizosaccharomyces pombe (strain 972 / ATCC 24843) (Fission yeast).